The primary structure comprises 216 residues: Thiamine-phosphate synthase (216 aa).

4-amino-2-methyl-5-(diphosphooxymethyl)pyrimidine is bound by residues 39–43 and Asn-71; that span reads QLRRK. Residues Asp-72 and Asp-91 each coordinate Mg(2+). A 4-amino-2-methyl-5-(diphosphooxymethyl)pyrimidine-binding site is contributed by Ser-109. Residue 136-138 participates in 2-[(2R,5Z)-2-carboxy-4-methylthiazol-5(2H)-ylidene]ethyl phosphate binding; that stretch reads SPT. Lys-139 lines the 4-amino-2-methyl-5-(diphosphooxymethyl)pyrimidine pocket. Residues Gly-172 and 192 to 193 each bind 2-[(2R,5Z)-2-carboxy-4-methylthiazol-5(2H)-ylidene]ethyl phosphate; that span reads IT.

The protein belongs to the thiamine-phosphate synthase family. Requires Mg(2+) as cofactor.

The catalysed reaction is 2-[(2R,5Z)-2-carboxy-4-methylthiazol-5(2H)-ylidene]ethyl phosphate + 4-amino-2-methyl-5-(diphosphooxymethyl)pyrimidine + 2 H(+) = thiamine phosphate + CO2 + diphosphate. The enzyme catalyses 2-(2-carboxy-4-methylthiazol-5-yl)ethyl phosphate + 4-amino-2-methyl-5-(diphosphooxymethyl)pyrimidine + 2 H(+) = thiamine phosphate + CO2 + diphosphate. It catalyses the reaction 4-methyl-5-(2-phosphooxyethyl)-thiazole + 4-amino-2-methyl-5-(diphosphooxymethyl)pyrimidine + H(+) = thiamine phosphate + diphosphate. Its pathway is cofactor biosynthesis; thiamine diphosphate biosynthesis; thiamine phosphate from 4-amino-2-methyl-5-diphosphomethylpyrimidine and 4-methyl-5-(2-phosphoethyl)-thiazole: step 1/1. Functionally, condenses 4-methyl-5-(beta-hydroxyethyl)thiazole monophosphate (THZ-P) and 2-methyl-4-amino-5-hydroxymethyl pyrimidine pyrophosphate (HMP-PP) to form thiamine monophosphate (TMP). The polypeptide is Thiamine-phosphate synthase (Bordetella avium (strain 197N)).